The chain runs to 162 residues: MRHRKSGRKLNRSSSHRSALFRNMAKSLLTYGKIRTTEAKAKELRGVVEPLITLALRNDLHARRQAYKVLGSHQLVKRLFDEIGPKFVGVPGGYTRVLKLGAPRPGDNAPMAVIELTRLGDAEAAAKEAPAKEVAEEKAAKPAKKAAPKKAEKEEAEDAAEA.

A compositionally biased stretch (basic and acidic residues) spans 125–140 (AAKEAPAKEVAEEKAA). The tract at residues 125–162 (AAKEAPAKEVAEEKAAKPAKKAAPKKAEKEEAEDAAEA) is disordered.

This sequence belongs to the bacterial ribosomal protein bL17 family. As to quaternary structure, part of the 50S ribosomal subunit. Contacts protein L32.

The polypeptide is Large ribosomal subunit protein bL17 (Oleidesulfovibrio alaskensis (strain ATCC BAA-1058 / DSM 17464 / G20) (Desulfovibrio alaskensis)).